Here is a 90-residue protein sequence, read N- to C-terminus: Probable Fe(2+)-trafficking protein (90 aa).

Belongs to the Fe(2+)-trafficking protein family.

Its function is as follows. Could be a mediator in iron transactions between iron acquisition and iron-requiring processes, such as synthesis and/or repair of Fe-S clusters in biosynthetic enzymes. The protein is Probable Fe(2+)-trafficking protein of Azotobacter vinelandii (strain DJ / ATCC BAA-1303).